Reading from the N-terminus, the 541-residue chain is GTPase Obg (541 aa).

The region spanning 2–159 (PTFVDRVVLH…LDAVLELKSV (158 aa)) is the Obg domain. The disordered stretch occupies residues 63–84 (HPHQRAGGGRPGQGSNRHGADG). The OBG-type G domain maps to 160–332 (ADVALVGFPS…LALALAELVA (173 aa)). Residues 166-173 (GFPSAGKS), 191-195 (FTTLV), 213-216 (DVPG), 284-287 (NKVD), and 313-315 (STA) each bind GTP. Mg(2+) is bound by residues Ser-173 and Thr-193. In terms of domain architecture, OCT spans 350-427 (PRAVDEPDFT…IGAVTFDWEP (78 aa)). The segment at 497–541 (KRLTRAQRTALSDSADDFDDGAGFSDSAAFGDSGGSGGDADGGRG) is disordered. Residues 517–527 (GAGFSDSAAFG) are compositionally biased toward low complexity. A compositionally biased stretch (gly residues) spans 528–541 (DSGGSGGDADGGRG).

It belongs to the TRAFAC class OBG-HflX-like GTPase superfamily. OBG GTPase family. Monomer. It depends on Mg(2+) as a cofactor.

It is found in the cytoplasm. Functionally, an essential GTPase which binds GTP, GDP and possibly (p)ppGpp with moderate affinity, with high nucleotide exchange rates and a fairly low GTP hydrolysis rate. Plays a role in control of the cell cycle, stress response, ribosome biogenesis and in those bacteria that undergo differentiation, in morphogenesis control. The chain is GTPase Obg from Parafrankia sp. (strain EAN1pec).